Reading from the N-terminus, the 599-residue chain is Elongation factor 4 (599 aa).

The tr-type G domain maps to 2–184 (KNIRNFSIIA…RLVRDIPPPE (183 aa)). GTP contacts are provided by residues 14-19 (DHGKST) and 131-134 (NKID).

This sequence belongs to the TRAFAC class translation factor GTPase superfamily. Classic translation factor GTPase family. LepA subfamily.

The protein localises to the cell inner membrane. The enzyme catalyses GTP + H2O = GDP + phosphate + H(+). Required for accurate and efficient protein synthesis under certain stress conditions. May act as a fidelity factor of the translation reaction, by catalyzing a one-codon backward translocation of tRNAs on improperly translocated ribosomes. Back-translocation proceeds from a post-translocation (POST) complex to a pre-translocation (PRE) complex, thus giving elongation factor G a second chance to translocate the tRNAs correctly. Binds to ribosomes in a GTP-dependent manner. In Citrobacter koseri (strain ATCC BAA-895 / CDC 4225-83 / SGSC4696), this protein is Elongation factor 4.